A 64-amino-acid polypeptide reads, in one-letter code: Conotoxin Im11.4 (64 aa).

The first 26 residues, 1–26 (MMFRLTSVSCILLVIAFLNLVGLTNA), serve as a signal peptide directing secretion. Disulfide bonds link Cys-27–Cys-41, Cys-34–Cys-46, Cys-40–Cys-50, and Cys-45–Cys-54. A Histidine amide modification is found at His-57. Positions 61–64 (ATFQ) are excised as a propeptide.

This sequence belongs to the conotoxin I2 superfamily. As to expression, expressed by the venom duct.

It localises to the secreted. The sequence is that of Conotoxin Im11.4 from Conus imperialis (Imperial cone).